The chain runs to 478 residues: MGSRLNPSSNMYIPMNGPRGGYYGMPSMGQLQHPLFNYQFPPGGFQHLQQQQQQQQQQQQQQQQQQQQQTQVQQLHNQLHQQHNQQIQQQAQATQQHLQTQQYLQSQIHQQSQQSQLSNNLNSNSKESTNIPKTNTQYTNFDSKNLDLASRYFSECSTKDFIGNKKKSTSVAWNANGTKIASSGSDGIVRVWNFDPLGNSNNNNNSNNTSSNSKNNNIKETIELKGHDGSIEKISWSPKNNDLLASAGTDKVIKIWDVKIGKCIGTVSTNSENIDVRWSPDGQFIVACTRDDHLALIDLPTIKTLKIYKFNGEELNQVGWDNNGDLILMANSMGNIEAYKFLPKSTTHVKHLKTLYGHTASIYCMEFDPTGKYLAAGSADSIVSLWDIEDMMCVKTFIKSTFPCRSVSFSFDGQFIAASSFESTIEIFHIESSQPIHTIECSGVSSLMWHPTLPLLAYAPEINENNKDPSIRVFGYHS.

Disordered regions lie at residues 33–53 (HPLF…QQQQ) and 106–140 (SQIH…QYTN). The segment covering 106–125 (SQIHQQSQQSQLSNNLNSNS) has biased composition (low complexity). A compositionally biased stretch (polar residues) spans 126 to 140 (KESTNIPKTNTQYTN). WD repeat units follow at residues 163 to 202 (GNKK…NSNN), 226 to 268 (GHDG…GTVS), 270 to 307 (NSEN…TLKI), 310 to 349 (FNGE…TTHV), 357 to 396 (GHTA…CVKT), 399 to 438 (KSTF…PIHT), and 440 to 478 (ECSG…GYHS).

The protein belongs to the THOC3 family.

The sequence is that of WD repeat-containing protein AAC3 (AAC3) from Dictyostelium discoideum (Social amoeba).